A 174-amino-acid polypeptide reads, in one-letter code: MNRTEKEQVISELHEKMAKAKAAIVAEPKGLNVAVVTDLRKKLRDAKIDYRIVKNTLAARAAKGTPVEPVADRFVGPTALVMSYDDVVTPAKLLADFMKDRENFVIRTAIIEGKVIDAKGVQALAKMPGLKELRGQIAAMIAQPATKLARLVGTPGQQLARVVGARREQLEKQA.

The protein belongs to the universal ribosomal protein uL10 family. In terms of assembly, part of the ribosomal stalk of the 50S ribosomal subunit. The N-terminus interacts with L11 and the large rRNA to form the base of the stalk. The C-terminus forms an elongated spine to which L12 dimers bind in a sequential fashion forming a multimeric L10(L12)X complex.

Functionally, forms part of the ribosomal stalk, playing a central role in the interaction of the ribosome with GTP-bound translation factors. The chain is Large ribosomal subunit protein uL10 from Anaeromyxobacter dehalogenans (strain 2CP-1 / ATCC BAA-258).